Consider the following 786-residue polypeptide: Endonuclease MutS2 (786 aa).

334–341 (GPNTGGKT) is an ATP binding site. In terms of domain architecture, Smr spans 711–786 (LDLRGERYEN…GNGATVVYFK (76 aa)).

This sequence belongs to the DNA mismatch repair MutS family. MutS2 subfamily. Homodimer. Binds to stalled ribosomes, contacting rRNA.

Endonuclease that is involved in the suppression of homologous recombination and thus may have a key role in the control of bacterial genetic diversity. Functionally, acts as a ribosome collision sensor, splitting the ribosome into its 2 subunits. Detects stalled/collided 70S ribosomes which it binds and splits by an ATP-hydrolysis driven conformational change. Acts upstream of the ribosome quality control system (RQC), a ribosome-associated complex that mediates the extraction of incompletely synthesized nascent chains from stalled ribosomes and their subsequent degradation. Probably generates substrates for RQC. The protein is Endonuclease MutS2 of Ligilactobacillus salivarius (strain UCC118) (Lactobacillus salivarius).